The primary structure comprises 201 residues: Translation initiation factor IF-3 (201 aa).

The protein belongs to the IF-3 family. In terms of assembly, monomer.

It localises to the cytoplasm. Functionally, IF-3 binds to the 30S ribosomal subunit and shifts the equilibrium between 70S ribosomes and their 50S and 30S subunits in favor of the free subunits, thus enhancing the availability of 30S subunits on which protein synthesis initiation begins. In Prochlorococcus marinus (strain SARG / CCMP1375 / SS120), this protein is Translation initiation factor IF-3.